The sequence spans 290 residues: Arylamine N-acetyltransferase 2 (290 aa).

C68 (acyl-thioester intermediate) is an active-site residue. The CoA site is built by S103 and G104. Position 106-107 (106-107 (IH)) interacts with substrate. Residues H107 and D122 contribute to the active site. Residue Y208 coordinates CoA.

This sequence belongs to the arylamine N-acetyltransferase family.

The protein resides in the cytoplasm. It carries out the reaction an arylamine + acetyl-CoA = an N-acetylarylamine + CoA. It catalyses the reaction an N-hydroxyarylamine + acetyl-CoA = an N-acetoxyarylamine + CoA. Its function is as follows. Catalyzes the N- or O-acetylation of various arylamine and heterocyclic amine substrates, and participates in the detoxification of a plethora of hydrazine and arylamine drugs. In Mus musculus (Mouse), this protein is Arylamine N-acetyltransferase 2 (Nat2).